Here is a 99-residue protein sequence, read N- to C-terminus: METLSFEFPAGQPPKGRALVGVVGSGDLEVLLEPGSPGKLSIQVVTSVNGASLRWKHLFERMFDGQTPPALSIDIHDFGATPGVVRLRLEQGFEEIGHD.

Ser25 is subject to O-(phosphoribosyl dephospho-coenzyme A)serine.

Belongs to the MdcC family. In terms of processing, covalently binds the prosthetic group of malonate decarboxylase.

The protein resides in the cytoplasm. Functionally, subunit of malonate decarboxylase, it is an acyl carrier protein to which acetyl and malonyl thioester residues are bound via a 2'-(5''-phosphoribosyl)-3'-dephospho-CoA prosthetic group and turn over during the catalytic mechanism. The polypeptide is Malonate decarboxylase acyl carrier protein (Pseudomonas savastanoi pv. phaseolicola (strain 1448A / Race 6) (Pseudomonas syringae pv. phaseolicola (strain 1448A / Race 6))).